A 187-amino-acid chain; its full sequence is UPF0301 protein PC1_3712 (187 aa).

This sequence belongs to the UPF0301 (AlgH) family.

The polypeptide is UPF0301 protein PC1_3712 (Pectobacterium carotovorum subsp. carotovorum (strain PC1)).